The primary structure comprises 347 residues: GMP reductase (347 aa).

Position 108–131 (108–131) interacts with NADP(+); sequence ADFQKTKDIMALTDDLIFICVDIA. Residues Gly-181 and Gly-183 each contribute to the K(+) site. Residue Cys-186 is the Thioimidate intermediate of the active site. 216–239 serves as a coordination point for NADP(+); that stretch reads IIGDGGCSCAGDVSKAFGGGADFV.

It belongs to the IMPDH/GMPR family. GuaC type 1 subfamily. In terms of assembly, homotetramer.

The enzyme catalyses IMP + NH4(+) + NADP(+) = GMP + NADPH + 2 H(+). In terms of biological role, catalyzes the irreversible NADPH-dependent deamination of GMP to IMP. It functions in the conversion of nucleobase, nucleoside and nucleotide derivatives of G to A nucleotides, and in maintaining the intracellular balance of A and G nucleotides. The sequence is that of GMP reductase from Aliivibrio salmonicida (strain LFI1238) (Vibrio salmonicida (strain LFI1238)).